The primary structure comprises 234 residues: Large ribosomal subunit protein uL1 (234 aa).

Belongs to the universal ribosomal protein uL1 family. Part of the 50S ribosomal subunit.

In terms of biological role, binds directly to 23S rRNA. The L1 stalk is quite mobile in the ribosome, and is involved in E site tRNA release. Functionally, protein L1 is also a translational repressor protein, it controls the translation of the L11 operon by binding to its mRNA. The protein is Large ribosomal subunit protein uL1 of Anaeromyxobacter dehalogenans (strain 2CP-C).